The sequence spans 234 residues: Orotidine 5'-phosphate decarboxylase (234 aa).

Residues Asp-14, Lys-36, 63 to 72 (DLKFHDIPNT), Thr-123, Arg-184, Gln-193, Gly-213, and Arg-214 contribute to the substrate site. The Proton donor role is filled by Lys-65.

It belongs to the OMP decarboxylase family. Type 1 subfamily. In terms of assembly, homodimer.

The catalysed reaction is orotidine 5'-phosphate + H(+) = UMP + CO2. The protein operates within pyrimidine metabolism; UMP biosynthesis via de novo pathway; UMP from orotate: step 2/2. Its function is as follows. Catalyzes the decarboxylation of orotidine 5'-monophosphate (OMP) to uridine 5'-monophosphate (UMP). This Pseudoalteromonas translucida (strain TAC 125) protein is Orotidine 5'-phosphate decarboxylase.